Reading from the N-terminus, the 484-residue chain is Protein phosphatase 1B (484 aa).

Basic and acidic residues predominate over residues 1–14 (MGAFLDKPKTEKHN). The interval 1–20 (MGAFLDKPKTEKHNAHGAGN) is disordered. Residue G2 is the site of N-myristoyl glycine attachment. K12 is covalently cross-linked (Glycyl lysine isopeptide (Lys-Gly) (interchain with G-Cter in ISG15)). The PPM-type phosphatase domain occupies 23–295 (RYGLSSMQGW…DNMSIVLVCF (273 aa)). The Mn(2+) site is built by D60 and G61. K142 is covalently cross-linked (Glycyl lysine isopeptide (Lys-Gly) (interchain with G-Cter in ISG15)). Residues D243 and D286 each coordinate Mn(2+). Position 391 is a phosphoserine (S391). Residues 431-484 (EENPAEQAATAASSNSDAGNTVAMQESHTESKSDLAELDSCTEDAGTKMSGEKL) form a disordered region. Positions 440–456 (TAASSNSDAGNTVAMQE) are enriched in polar residues.

The protein belongs to the PP2C family. As to quaternary structure, monomer. Interacts with PAK6. Interacts with the phosphorylated form of IKBKB/IKKB. Mg(2+) is required as a cofactor. The cofactor is Mn(2+). Isgylation negatively regulates its activity. In terms of processing, N-myristoylation is essential for the recognition of its substrates for dephosphorylation.

The protein localises to the cytoplasm. It localises to the cytosol. The protein resides in the membrane. The catalysed reaction is O-phospho-L-seryl-[protein] + H2O = L-seryl-[protein] + phosphate. It catalyses the reaction O-phospho-L-threonyl-[protein] + H2O = L-threonyl-[protein] + phosphate. In terms of biological role, enzyme with a broad specificity. Dephosphorylates PRKAA1 and PRKAA2. Inhibits TBK1-mediated antiviral signaling by dephosphorylating it at 'Ser-172'. Plays an important role in the termination of TNF-alpha-mediated NF-kappa-B activation through dephosphorylating and inactivating IKBKB/IKKB. The polypeptide is Protein phosphatase 1B (PPM1B) (Bos taurus (Bovine)).